Here is a 448-residue protein sequence, read N- to C-terminus: Ribosomal protein uS12 methylthiotransferase RimO (448 aa).

One can recognise an MTTase N-terminal domain in the interval 10 to 120 (PNIGFVSLGC…VMEHVHKYVP (111 aa)). [4Fe-4S] cluster is bound by residues C19, C55, C84, C152, C156, and C159. A Radical SAM core domain is found at 138–379 (LTPKHYAYLK…MELQQQISAQ (242 aa)). Residues 382 to 448 (QQKIGKTLPV…ADEYDLWGTC (67 aa)) enclose the TRAM domain.

It belongs to the methylthiotransferase family. RimO subfamily. [4Fe-4S] cluster is required as a cofactor.

The protein resides in the cytoplasm. It catalyses the reaction L-aspartate(89)-[ribosomal protein uS12]-hydrogen + (sulfur carrier)-SH + AH2 + 2 S-adenosyl-L-methionine = 3-methylsulfanyl-L-aspartate(89)-[ribosomal protein uS12]-hydrogen + (sulfur carrier)-H + 5'-deoxyadenosine + L-methionine + A + S-adenosyl-L-homocysteine + 2 H(+). In terms of biological role, catalyzes the methylthiolation of an aspartic acid residue of ribosomal protein uS12. The polypeptide is Ribosomal protein uS12 methylthiotransferase RimO (Mannheimia succiniciproducens (strain KCTC 0769BP / MBEL55E)).